Consider the following 61-residue polypeptide: uncharacterized protein (61 aa).

This is an uncharacterized protein from Acidianus convivator (ATV).